The sequence spans 369 residues: Beta-1,4-galactosyltransferase 2 (369 aa).

Topologically, residues 1–15 (MSRLLGGTLERVCKA) are cytoplasmic. The chain crosses the membrane as a helical; Signal-anchor for type II membrane protein span at residues 16–36 (VLLLCLLHFLVAVILYFDVYA). Residues 37–369 (QHLAFFSRFS…GRPMSWLNQG (333 aa)) lie on the Lumenal side of the membrane. Over residues 59-75 (SSSTNCSRPNATASSSG) the composition is skewed to polar residues. The segment at 59 to 90 (SSSTNCSRPNATASSSGLPEVPSARPGPTAPV) is disordered. N-linked (GlcNAc...) asparagine glycosylation is found at Asn-63 and Asn-68. Cys-94 and Cys-136 are oxidised to a cystine. Residues 147-151 (PFRHR), 186-188 (FNR), 214-215 (VD), and Trp-275 contribute to the UDP-alpha-D-galactose site. A disulfide bond links Cys-208 and Cys-227. Asp-215 lines the Mn(2+) pocket. N-acetyl-D-glucosamine is bound at residue 277–280 (GEDD). His-308 contacts Mn(2+). 308–310 (HDR) contacts UDP-alpha-D-galactose. Arg-320 contacts N-acetyl-D-glucosamine. Residue Asn-354 is glycosylated (N-linked (GlcNAc...) asparagine).

Belongs to the glycosyltransferase 7 family. Requires Mn(2+) as cofactor.

It is found in the golgi apparatus. The protein resides in the golgi stack membrane. It carries out the reaction D-glucose + UDP-alpha-D-galactose = lactose + UDP + H(+). The enzyme catalyses an N-acetyl-beta-D-glucosaminyl derivative + UDP-alpha-D-galactose = a beta-D-galactosyl-(1-&gt;4)-N-acetyl-beta-D-glucosaminyl derivative + UDP + H(+). It catalyses the reaction N-acetyl-D-glucosamine + UDP-alpha-D-galactose = beta-D-galactosyl-(1-&gt;4)-N-acetyl-D-glucosamine + UDP + H(+). It functions in the pathway protein modification; protein glycosylation. Its function is as follows. Responsible for the synthesis of complex-type N-linked oligosaccharides in many glycoproteins as well as the carbohydrate moieties of glycolipids. Can produce lactose. This is Beta-1,4-galactosyltransferase 2 (B4GALT2) from Cricetulus griseus (Chinese hamster).